A 734-amino-acid polypeptide reads, in one-letter code: Probable inactive histone-lysine N-methyltransferase SUVR1 (734 aa).

Positions 61–163 (QSTEKNKKEE…LPPLKRYVRR (103 aa)) are disordered. Positions 62 to 81 (STEKNKKEEEKKKKEEEKKS) are enriched in basic and acidic residues. A compositionally biased stretch (acidic residues) spans 98–109 (VQDEEDDMDEDE). Residues 113-122 (KRRLRSRRGR) are compositionally biased toward basic residues. Residues 123 to 132 (ASSSSSSSSS) show a composition bias toward low complexity. Cys-460, Cys-464, Cys-468, Cys-477, Cys-545, Cys-549, Cys-551, and Cys-555 together coordinate Zn(2+). The region spanning 460 to 563 (CSTSCIEDCL…RCGNRVVQRG (104 aa)) is the Pre-SET domain. The 131-residue stretch at 566-696 (NKLQVFFTPN…AMEELAWDYG (131 aa)) folds into the SET domain. S-adenosyl-L-methionine-binding positions include 577-579 (KGW) and 652-653 (NH). Position 655 (Cys-655) interacts with Zn(2+). Tyr-695 contacts S-adenosyl-L-methionine. The Post-SET domain occupies 707–723 (KPFDCLCGSRFCRNKKR). Zn(2+) contacts are provided by Cys-711, Cys-713, and Cys-718.

It belongs to the class V-like SAM-binding methyltransferase superfamily. Histone-lysine methyltransferase family. As to quaternary structure, interacts with SUVR2 and itself.

The protein localises to the nucleus. Its subcellular location is the chromosome. In terms of biological role, probable inactive histone-lysine methyltransferase that acts as regulator of transctiptional gene silencing independently of histone H3K9 methylation. Contributes to transcriptional gene silencing at RNA-directed DNA methylation (RdDM) target loci but also at RdDM-independent target loci. This is Probable inactive histone-lysine N-methyltransferase SUVR1 (SUVR1) from Arabidopsis thaliana (Mouse-ear cress).